The chain runs to 138 residues: Acidic phospholipase A2 BmooPLA2 (138 aa).

An N-terminal signal peptide occupies residues 1–16 (MRTLWIVAVLLLGVEG). 7 disulfides stabilise this stretch: Cys-42/Cys-131, Cys-44/Cys-60, Cys-59/Cys-111, Cys-65/Cys-138, Cys-66/Cys-104, Cys-73/Cys-97, and Cys-91/Cys-102. Ca(2+)-binding residues include Tyr-43, Gly-45, and Gly-47. His-63 is a catalytic residue. Position 64 (Asp-64) interacts with Ca(2+). The active site involves Asp-105.

Belongs to the phospholipase A2 family. Group II subfamily. D49 sub-subfamily. Requires Ca(2+) as cofactor. As to expression, expressed by the venom gland.

It is found in the secreted. The enzyme catalyses a 1,2-diacyl-sn-glycero-3-phosphocholine + H2O = a 1-acyl-sn-glycero-3-phosphocholine + a fatty acid + H(+). Functionally, snake venom phospholipase A2 (PLA2) that inhibits ADP- and collagen-induced platelet aggregation, has edema-inducing, anti-coagulant activity, antibacterial activity, and cytotoxic activity. In vivo, has a hypotensive effect. PLA2 catalyzes the calcium-dependent hydrolysis of the 2-acyl groups in 3-sn-phosphoglycerides. The sequence is that of Acidic phospholipase A2 BmooPLA2 from Bothrops moojeni (Lance-headed viper).